We begin with the raw amino-acid sequence, 636 residues long: Transcription termination factor FttA (636 aa).

The interval 3 to 70 is KHa; sequence SEMLEEIKRT…IIIRSDRSVL (68 aa). The tract at residues 71–138 is KHb; it reads MDPEKAIRKI…WAPKILRTPP (68 aa). Residues 179–383 form a metallo-beta-lactamase N-terminus region; that stretch reads WARLTAMGGF…LVMESTYGGH (205 aa). 6 residues coordinate Zn(2+): H242, H244, D246, H247, H329, and D352. The interval 384–577 is beta-Casp; sequence EDVQPSRNRA…MNIKTIEGFS (194 aa). The segment at 578–636 is metallo-beta-lactamase C-terminus; that stretch reads GHSDRRQLMEYVKRISPKPEKILLCHGDNYKTLDLASSIYRTYRIETKTPLNLETVRIQ. A Zn(2+)-binding site is contributed by H603.

This sequence belongs to the metallo-beta-lactamase superfamily. RNA-metabolizing metallo-beta-lactamase-like family. FttA subfamily. As to quaternary structure, homodimer. Interacts with RNA polymerase (RNAP), interacts with the Spt4-Spt5 complex. Does not seem to interact with the RNA degrading exosome. It depends on Zn(2+) as a cofactor.

Most active at 0.5 M or 0.7 M NaCl, less active at 1.0 M NaCl. Nuclease activity is inhibited by N,N,Tetrakis-(2-pyridylmethyl)-ethylene diamine (TPEN), a specific chelator of zinc ions. In terms of biological role, terminates transcription on the whole genome. Termination is linked to FttA-mediated RNA cleavage and does not require NTP hydrolysis. Cleaves endonucleolytically at the RNA exit channel of RNA polymerase (RNAP); the 5'-3' exonuclease activity of this protein degrades the nascent RNA released from RNAP. An RNA nuclease, it bind single-stranded RNA (ssRNA) with a preference for U-rich sequences. This Methanothermobacter thermautotrophicus (strain ATCC 29096 / DSM 1053 / JCM 10044 / NBRC 100330 / Delta H) (Methanobacterium thermoautotrophicum) protein is Transcription termination factor FttA.